A 276-amino-acid chain; its full sequence is Extracellular metalloprotease VDBG_07883 (276 aa).

A signal peptide spans 1–17 (MQSKFLWIAAASAATAA). 2 N-linked (GlcNAc...) asparagine glycosylation sites follow: Asn70 and Asn102. A Zn(2+)-binding site is contributed by His191. The active site involves Glu192. Zn(2+) is bound at residue His195. Asn222 carries N-linked (GlcNAc...) asparagine glycosylation. Residues Cys227 and Cys254 are joined by a disulfide bond.

It belongs to the peptidase M43B family.

The protein resides in the secreted. In terms of biological role, secreted metalloproteinase that allows assimilation of proteinaceous substrates. In Verticillium alfalfae (strain VaMs.102 / ATCC MYA-4576 / FGSC 10136) (Verticillium wilt of alfalfa), this protein is Extracellular metalloprotease VDBG_07883.